The sequence spans 241 residues: Methylthioribulose-1-phosphate dehydratase (241 aa).

Cys-96 provides a ligand contact to substrate. 2 residues coordinate Zn(2+): His-114 and His-116. Glu-138 functions as the Proton donor/acceptor in the catalytic mechanism. A Zn(2+)-binding site is contributed by His-194.

Belongs to the aldolase class II family. MtnB subfamily. In terms of assembly, homotetramer. Interacts with APAF1. May interact with CASP1. It depends on Zn(2+) as a cofactor. Expressed in skeletal muscle (at protein level).

It localises to the cytoplasm. It catalyses the reaction 5-(methylsulfanyl)-D-ribulose 1-phosphate = 5-methylsulfanyl-2,3-dioxopentyl phosphate + H2O. It participates in amino-acid biosynthesis; L-methionine biosynthesis via salvage pathway; L-methionine from S-methyl-5-thio-alpha-D-ribose 1-phosphate: step 2/6. Functionally, catalyzes the dehydration of methylthioribulose-1-phosphate (MTRu-1-P) into 2,3-diketo-5-methylthiopentyl-1-phosphate (DK-MTP-1-P). Functions in the methionine salvage pathway, which plays a key role in cancer, apoptosis, microbial proliferation and inflammation. May inhibit the CASP1-related inflammatory response (pyroptosis), the CASP9-dependent apoptotic pathway and the cytochrome c-dependent and APAF1-mediated cell death. In Mus musculus (Mouse), this protein is Methylthioribulose-1-phosphate dehydratase.